The sequence spans 300 residues: GTPase Era (300 aa).

The Era-type G domain maps to 5–172 (HSGFVAIIGR…LTALTDALPV (168 aa)). A G1 region spans residues 13–20 (GRPNVGKS). 13–20 (GRPNVGKS) lines the GTP pocket. A G2 region spans residues 39 to 43 (QTTRN). Residues 60–63 (DTPG) form a G3 region. Residues 60–64 (DTPGI) and 122–125 (NKID) each bind GTP. Positions 122-125 (NKID) are G4. Residues 151–153 (ISA) are G5. In terms of domain architecture, KH type-2 spans 203–280 (TRDEVPHAVA…NLKLWVRVQK (78 aa)).

This sequence belongs to the TRAFAC class TrmE-Era-EngA-EngB-Septin-like GTPase superfamily. Era GTPase family. Monomer.

The protein localises to the cytoplasm. It localises to the cell membrane. An essential GTPase that binds both GDP and GTP, with rapid nucleotide exchange. Plays a role in 16S rRNA processing and 30S ribosomal subunit biogenesis and possibly also in cell cycle regulation and energy metabolism. The chain is GTPase Era from Lacticaseibacillus paracasei (strain ATCC 334 / BCRC 17002 / CCUG 31169 / CIP 107868 / KCTC 3260 / NRRL B-441) (Lactobacillus paracasei).